We begin with the raw amino-acid sequence, 590 residues long: Aspartate--tRNA(Asp/Asn) ligase (590 aa).

Glutamate 173 is a binding site for L-aspartate. Positions 197–200 are aspartate; that stretch reads QIFK. Residue arginine 219 participates in L-aspartate binding. ATP is bound by residues 219-221 and glutamine 228; that span reads RDE. An L-aspartate-binding site is contributed by histidine 450. Residue glutamate 484 participates in ATP binding. Arginine 491 contributes to the L-aspartate binding site. 536–539 contacts ATP; the sequence is GLDR.

This sequence belongs to the class-II aminoacyl-tRNA synthetase family. Type 1 subfamily. Homodimer.

Its subcellular location is the cytoplasm. It catalyses the reaction tRNA(Asx) + L-aspartate + ATP = L-aspartyl-tRNA(Asx) + AMP + diphosphate. Functionally, aspartyl-tRNA synthetase with relaxed tRNA specificity since it is able to aspartylate not only its cognate tRNA(Asp) but also tRNA(Asn). Reaction proceeds in two steps: L-aspartate is first activated by ATP to form Asp-AMP and then transferred to the acceptor end of tRNA(Asp/Asn). The protein is Aspartate--tRNA(Asp/Asn) ligase of Coxiella burnetii (strain Dugway 5J108-111).